We begin with the raw amino-acid sequence, 92 residues long: Large ribosomal subunit protein eL31 (92 aa).

The protein belongs to the eukaryotic ribosomal protein eL31 family.

The chain is Large ribosomal subunit protein eL31 from Haloquadratum walsbyi (strain DSM 16790 / HBSQ001).